The sequence spans 418 residues: tRNA(Met) cytidine acetate ligase (418 aa).

ATP is bound by residues Gly95, Asn161, and Arg186.

It belongs to the TmcAL family.

It localises to the cytoplasm. The catalysed reaction is cytidine(34) in elongator tRNA(Met) + acetate + ATP = N(4)-acetylcytidine(34) in elongator tRNA(Met) + AMP + diphosphate. In terms of biological role, catalyzes the formation of N(4)-acetylcytidine (ac(4)C) at the wobble position of elongator tRNA(Met), using acetate and ATP as substrates. First activates an acetate ion to form acetyladenylate (Ac-AMP) and then transfers the acetyl group to tRNA to form ac(4)C34. This chain is tRNA(Met) cytidine acetate ligase, found in Thermotoga maritima (strain ATCC 43589 / DSM 3109 / JCM 10099 / NBRC 100826 / MSB8).